Here is a 329-residue protein sequence, read N- to C-terminus: Bifunctional muramidase/DL-endopeptidase CwlT (329 aa).

An N-terminal signal peptide occupies residues Met-1–Thr-29. A muramidase region spans residues Arg-59–Val-192. The NlpC/P60 domain maps to Met-206–Lys-329. The Nucleophile role is filled by Cys-237. The Proton acceptor role is filled by His-290. Residue Asn-302 is part of the active site.

This sequence belongs to the peptidase C40 family.

Its subcellular location is the secreted. The catalysed reaction is Hydrolysis of (1-&gt;4)-beta-linkages between N-acetylmuramic acid and N-acetyl-D-glucosamine residues in a peptidoglycan and between N-acetyl-D-glucosamine residues in chitodextrins.. Exhibits both muramidase and DL-endopeptidase activities. The N-terminal region acts as a N-acetylmuramidase, which cleaves the bond between N-acetylmuramic acid and N-acetyl-D-glucosamine (MurNAc-GlcNAc) in peptidoglycan. The C-terminal region acts as a DL-endopeptidase that cleaves the bond between D-gamma-glutamate and meso-diaminopimelic acid. Cannot degrade purified B.anthracis peptidoglycan, which differ from those of B.subtilis. CwlT is required for ICEBs1 conjugation: the muramidase activity is essential, whereas the peptidase activity is partially dispensable for transfer of ICEBs1. The protein is Bifunctional muramidase/DL-endopeptidase CwlT of Bacillus subtilis (strain 168).